A 468-amino-acid chain; its full sequence is 6-phospho-beta-galactosidase (468 aa).

5 residues coordinate D-galactose 6-phosphate: Q19, H116, N159, E160, and N297. The Proton donor role is filled by E160. Catalysis depends on E375, which acts as the Nucleophile. The D-galactose 6-phosphate site is built by S428, W429, K435, and Y437.

This sequence belongs to the glycosyl hydrolase 1 family.

It carries out the reaction a 6-phospho-beta-D-galactoside + H2O = D-galactose 6-phosphate + an alcohol. Its pathway is carbohydrate metabolism; lactose degradation; D-galactose 6-phosphate and beta-D-glucose from lactose 6-phosphate: step 1/1. The protein is 6-phospho-beta-galactosidase of Streptococcus pyogenes serotype M18 (strain MGAS8232).